We begin with the raw amino-acid sequence, 244 residues long: Orotidine 5'-phosphate decarboxylase (244 aa).

Substrate contacts are provided by residues Asp-18, Lys-43, 73–82 (DLKLADIGYI), Ser-130, 182–192 (PGVGAQGGKPG), Gly-206, and Arg-207. The Proton donor role is filled by Lys-75.

It belongs to the OMP decarboxylase family. Type 1 subfamily. As to quaternary structure, homodimer.

It catalyses the reaction orotidine 5'-phosphate + H(+) = UMP + CO2. It functions in the pathway pyrimidine metabolism; UMP biosynthesis via de novo pathway; UMP from orotate: step 2/2. In terms of biological role, catalyzes the decarboxylation of orotidine 5'-monophosphate (OMP) to uridine 5'-monophosphate (UMP). This chain is Orotidine 5'-phosphate decarboxylase, found in Aeropyrum pernix (strain ATCC 700893 / DSM 11879 / JCM 9820 / NBRC 100138 / K1).